We begin with the raw amino-acid sequence, 345 residues long: Viral Fc-gamma receptor-like protein UL119 (345 aa).

An N-terminal signal peptide occupies residues 1–23; it reads MCSVLAIALVVALLGDMHPGVKS. Positions 23 to 43 are disordered; that stretch reads SSTTSAVTSPSNTTVTSTTSI. Over 24–293 the chain is Virion surface; that stretch reads STTSAVTSPS…IKSDPLFEDR (270 aa). N34, N48, N95, N104, N148, N179, N198, N217, N225, N241, N244, and N260 each carry an N-linked (GlcNAc...) asparagine; by host glycan. One can recognise an Ig-like V-type domain in the interval 91 to 190; that stretch reads QVSLNATCKV…TWDLFTYPIY (100 aa). The chain crosses the membrane as a helical span at residues 294-314; sequence LLAYGVLAFLVFMVIILLYVT. Topologically, residues 315 to 345 are intravirion; that stretch reads YMLARRRDWSYKRLEEPVEEKKHPVPYFKQW.

The protein localises to the virion membrane. In terms of biological role, serves as a receptor for the Fc part of human IgG. May thus be involved in interfering with host Ig-mediated immune responses. The protein is Viral Fc-gamma receptor-like protein UL119 (UL119/UL118) of Homo sapiens (Human).